We begin with the raw amino-acid sequence, 371 residues long: Meiotic drive suppressor wtf18 (371 aa).

8 consecutive transmembrane segments (helical) span residues 86-106 (FLLR…TAWV), 120-140 (AFSV…FCFF), 153-173 (VTVI…AQCV), 197-217 (DLVV…FGCV), 233-253 (CSIS…IWTL), 257-277 (LFGL…TKGL), 287-307 (ATGY…LFFY), and 321-341 (FIGN…GGIG).

The protein belongs to the WTF family. Homomer. Interacts with other proteins that exhibit high sequence similarity.

Its subcellular location is the spore membrane. It is found in the vacuole membrane. Acts as a suppressor component of the dual wtf meiotic drive system, and can suppress but not confer meiotic drive by compatible poisons. Wtf meiotic drive systems promote unequal transmission of alleles from the parental zygote to progeny spores by encoding a poison and an antidote from the same locus; the poison is trans-acting and forms toxic aggregates in all spores within an ascus, wherease the antidote is spore-specific and targets aggregates for degradation by the vacuole. Meiotic drive by wtf systems therefore lead to poisoning of all progeny that do not inherit the dual poison/antidote allele, or express a compatible antidote. The protein is Meiotic drive suppressor wtf18 of Schizosaccharomyces kambucha (Fission yeast).